Here is a 189-residue protein sequence, read N- to C-terminus: Parkinson disease protein 7 homolog (189 aa).

Ala-2 carries the N-acetylalanine modification. S-palmitoyl cysteine attachment occurs at residues Cys-46 and Cys-53. Tyr-67 carries the phosphotyrosine modification. Cys-106 serves as the catalytic Nucleophile. Cys-106 is modified (cysteine sulfinic acid (-SO2H); alternate). Cys-106 is lipidated: S-palmitoyl cysteine; alternate. The active site involves His-126. Residue Lys-130 forms a Glycyl lysine isopeptide (Lys-Gly) (interchain with G-Cter in SUMO) linkage. Lys-148 is modified (N6-acetyllysine). An N6-succinyllysine modification is found at Lys-182.

This sequence belongs to the peptidase C56 family. In terms of assembly, homodimer. Binds EFCAB6/DJBP and PIAS2. Part of a ternary complex containing PARK7, EFCAB6/DJBP and AR. Binds to HIPK1. Interacts (via N-terminus) with OTUD7B. Interacts with BBS1, CLCF1 and MTERF. Interacts (via C-terminus) with NCF1; the interaction is enhanced by LPS and modulates NCF1 phosphorylation and membrane translocation. Interacts with NENF. Deglycase activity does not require glutathione as a cofactor, however, glycated glutathione constitutes a PARK7 substrate. is required as a cofactor. Sumoylated on Lys-130 by PIAS2 or PIAS4; which is essential for cell-growth promoting activity and transforming activity. In terms of processing, undergoes cleavage of a C-terminal peptide and subsequent activation of protease activity in response to oxidative stress. In terms of tissue distribution, expressed in erythroblasts and in mature red blood cells from peripheral blood (at protein level). In pancreas, expression is higher in islets than surrounding exocrine tissues.

Its subcellular location is the cell membrane. The protein localises to the cytoplasm. It is found in the membrane raft. It localises to the nucleus. The protein resides in the mitochondrion. Its subcellular location is the endoplasmic reticulum. The enzyme catalyses N(omega)-(1-hydroxy-2-oxopropyl)-L-arginyl-[protein] + H2O = lactate + L-arginyl-[protein] + H(+). It carries out the reaction N(6)-(1-hydroxy-2-oxopropyl)-L-lysyl-[protein] + H2O = lactate + L-lysyl-[protein] + H(+). It catalyses the reaction S-(1-hydroxy-2-oxopropyl)-L-cysteinyl-[protein] + H2O = lactate + L-cysteinyl-[protein] + H(+). The catalysed reaction is N(omega)-(1-hydroxy-2-oxoethyl)-L-arginyl-[protein] + H2O = L-arginyl-[protein] + glycolate + H(+). The enzyme catalyses N(6)-(1-hydroxy-2-oxoethyl)-L-lysyl-[protein] + H2O = glycolate + L-lysyl-[protein] + H(+). It carries out the reaction S-(1-hydroxy-2-oxoethyl)-L-cysteinyl-[protein] + H2O = glycolate + L-cysteinyl-[protein] + H(+). It catalyses the reaction N(2)-(1-hydroxy-2-oxopropyl)-dGTP + H2O = lactate + dGTP + H(+). The catalysed reaction is N(2)-(1-hydroxy-2-oxopropyl)-GTP + H2O = lactate + GTP + H(+). The enzyme catalyses N(2)-(1-hydroxy-2-oxopropyl)-GDP + H2O = lactate + GDP + H(+). It carries out the reaction N(2)-(1-hydroxy-2-oxopropyl)-GMP + H2O = lactate + GMP + H(+). It catalyses the reaction N(2)-(1-hydroxy-2-oxoethyl)-dGTP + H2O = dGTP + glycolate + H(+). The catalysed reaction is N(2)-(1-hydroxy-2-oxoethyl)-GTP + H2O = glycolate + GTP + H(+). The enzyme catalyses N(2)-(1-hydroxy-2-oxoethyl)-GDP + H2O = glycolate + GDP + H(+). It carries out the reaction N(2)-(1-hydroxy-2-oxoethyl)-GMP + H2O = glycolate + GMP + H(+). It catalyses the reaction an N(2)-(1-hydroxy-2-oxopropyl)-guanosine in RNA + H2O = a guanosine in RNA + lactate + H(+). The catalysed reaction is an N(2)-(1-hydroxy-2-oxopropyl)-2'-deoxyguanosine in DNA + H2O = a 2'-deoxyguanosine in DNA + lactate + H(+). The enzyme catalyses an N(2)-(1-hydroxy-2-oxoethyl)-guanosine in RNA + H2O = a guanosine in RNA + glycolate + H(+). It carries out the reaction an N(2)-(1-hydroxy-2-oxoethyl)-2'-deoxyguanosine in DNA + H2O = a 2'-deoxyguanosine in DNA + glycolate + H(+). Multifunctional protein with controversial molecular function which plays an important role in cell protection against oxidative stress and cell death acting as oxidative stress sensor and redox-sensitive chaperone and protease. It is involved in neuroprotective mechanisms like the stabilization of NFE2L2 and PINK1 proteins, male fertility as a positive regulator of androgen signaling pathway as well as cell growth and transformation through, for instance, the modulation of NF-kappa-B signaling pathway. Has been described as a protein and nucleotide deglycase that catalyzes the deglycation of the Maillard adducts formed between amino groups of proteins or nucleotides and reactive carbonyl groups of glyoxals. But this function is rebuted by other works. As a protein deglycase, repairs methylglyoxal- and glyoxal-glycated proteins, and releases repaired proteins and lactate or glycolate, respectively. Deglycates cysteine, arginine and lysine residues in proteins, and thus reactivates these proteins by reversing glycation by glyoxals. Acts on early glycation intermediates (hemithioacetals and aminocarbinols), preventing the formation of advanced glycation endproducts (AGE) that cause irreversible damage. Also functions as a nucleotide deglycase able to repair glycated guanine in the free nucleotide pool (GTP, GDP, GMP, dGTP) and in DNA and RNA. Is thus involved in a major nucleotide repair system named guanine glycation repair (GG repair), dedicated to reversing methylglyoxal and glyoxal damage via nucleotide sanitization and direct nucleic acid repair. Protects histones from adduction by methylglyoxal, controls the levels of methylglyoxal-derived argininine modifications on chromatin. Able to remove the glycations and restore histone 3, histone glycation disrupts both local and global chromatin architecture by altering histone-DNA interactions as well as histone acetylation and ubiquitination levels. Displays a very low glyoxalase activity that may reflect its deglycase activity. Eliminates hydrogen peroxide and protects cells against hydrogen peroxide-induced cell death. Required for correct mitochondrial morphology and function as well as for autophagy of dysfunctional mitochondria. Plays a role in regulating expression or stability of the mitochondrial uncoupling proteins SLC25A14 and SLC25A27 in dopaminergic neurons of the substantia nigra pars compacta and attenuates the oxidative stress induced by calcium entry into the neurons via L-type channels during pacemaking. Regulates astrocyte inflammatory responses, may modulate lipid rafts-dependent endocytosis in astrocytes and neuronal cells. In pancreatic islets, involved in the maintenance of mitochondrial reactive oxygen species (ROS) levels and glucose homeostasis in an age- and diet dependent manner. Protects pancreatic beta cells from cell death induced by inflammatory and cytotoxic setting. Binds to a number of mRNAs containing multiple copies of GG or CC motifs and partially inhibits their translation but dissociates following oxidative stress. Metal-binding protein able to bind copper as well as toxic mercury ions, enhances the cell protection mechanism against induced metal toxicity. In macrophages, interacts with the NADPH oxidase subunit NCF1 to direct NADPH oxidase-dependent ROS production, and protects against sepsis. The protein is Parkinson disease protein 7 homolog of Mus musculus (Mouse).